The following is a 448-amino-acid chain: Chromosomal replication initiator protein DnaA (448 aa).

Positions 1–73 (MNAQLKQLWT…INAIKLITSK (73 aa)) are domain I, interacts with DnaA modulators. Positions 73–109 (KKYNIEFSITSEEIFNNQQLKPKSSNDNIVVNDEMTS) are domain II. Positions 110–326 (ILNPKYTFDS…GALIRIVAYS (217 aa)) are domain III, AAA+ region. 4 residues coordinate ATP: Gly-154, Gly-156, Lys-157, and Thr-158. Residues 327–448 (SLTNREISVD…DDLNKKITNN (122 aa)) form a domain IV, binds dsDNA region.

Belongs to the DnaA family. In terms of assembly, oligomerizes as a right-handed, spiral filament on DNA at oriC.

It is found in the cytoplasm. Functionally, plays an essential role in the initiation and regulation of chromosomal replication. ATP-DnaA binds to the origin of replication (oriC) to initiate formation of the DNA replication initiation complex once per cell cycle. Binds the DnaA box (a 9 base pair repeat at the origin) and separates the double-stranded (ds)DNA. Forms a right-handed helical filament on oriC DNA; dsDNA binds to the exterior of the filament while single-stranded (ss)DNA is stabiized in the filament's interior. The ATP-DnaA-oriC complex binds and stabilizes one strand of the AT-rich DNA unwinding element (DUE), permitting loading of DNA polymerase. After initiation quickly degrades to an ADP-DnaA complex that is not apt for DNA replication. Binds acidic phospholipids. The polypeptide is Chromosomal replication initiator protein DnaA (Clostridium novyi (strain NT)).